Consider the following 236-residue polypeptide: UPF0502 protein Bcep1808_3727 (236 aa).

It belongs to the UPF0502 family.

The protein is UPF0502 protein Bcep1808_3727 of Burkholderia vietnamiensis (strain G4 / LMG 22486) (Burkholderia cepacia (strain R1808)).